Reading from the N-terminus, the 513-residue chain is Tigger transposable element-derived protein 4 (513 aa).

The HTH psq-type domain maps to 12–63 (PVTVKKKKSLSIEEKIDIINAVESGKKKAEIAAEYGIKKNSLSSIMKNKDKV). DNA-binding regions (H-T-H motif) lie at residues 39 to 59 (KAEI…IMKN) and 108 to 139 (PMLR…FKSR). The 72-residue stretch at 75-146 (KRKRLRTAFY…KSRYGLVFRA (72 aa)) folds into the HTH CENPB-type domain. Residues 174–375 (YHPKNVFNVK…VTPETIVKSY (202 aa)) enclose the DDE-1 domain. The span at 433–448 (TQKDDAEWAGESKQDE) shows a compositional bias: basic and acidic residues. The tract at residues 433–473 (TQKDDAEWAGESKQDETGLYTSDEEEEDSGALEVDLPSPSK) is disordered.

This sequence belongs to the tigger transposable element derived protein family.

Its subcellular location is the nucleus. This is Tigger transposable element-derived protein 4 (Tigd4) from Mus musculus (Mouse).